We begin with the raw amino-acid sequence, 476 residues long: Trigger factor (476 aa).

One can recognise a PPIase FKBP-type domain in the interval 174 to 261 (GDIAVVSFKG…LKDLKEKELP (88 aa)). Positions 436 to 476 (KENTTKTSKTTKNSKTTKATKTTKTTKTTKTSKTQNKKEKK) are disordered. The segment covering 440-469 (TKTSKTTKNSKTTKATKTTKTTKTTKTSKT) has biased composition (low complexity).

It belongs to the FKBP-type PPIase family. Tig subfamily.

The protein resides in the cytoplasm. It catalyses the reaction [protein]-peptidylproline (omega=180) = [protein]-peptidylproline (omega=0). In terms of biological role, involved in protein export. Acts as a chaperone by maintaining the newly synthesized protein in an open conformation. Functions as a peptidyl-prolyl cis-trans isomerase. This is Trigger factor from Prochlorococcus marinus (strain MIT 9215).